The chain runs to 258 residues: uncharacterized protein (258 aa).

This is an uncharacterized protein from Streptococcus pneumoniae serotype 4 (strain ATCC BAA-334 / TIGR4).